The chain runs to 382 residues: 3-dehydroquinate synthase (382 aa).

NAD(+) is bound by residues 115-119 (GVVGD), 139-140 (TS), lysine 152, and lysine 161. Positions 194, 256, and 274 each coordinate Zn(2+).

This sequence belongs to the sugar phosphate cyclases superfamily. Dehydroquinate synthase family. Co(2+) serves as cofactor. Requires Zn(2+) as cofactor. NAD(+) is required as a cofactor.

It localises to the cytoplasm. It catalyses the reaction 7-phospho-2-dehydro-3-deoxy-D-arabino-heptonate = 3-dehydroquinate + phosphate. It participates in metabolic intermediate biosynthesis; chorismate biosynthesis; chorismate from D-erythrose 4-phosphate and phosphoenolpyruvate: step 2/7. Functionally, catalyzes the conversion of 3-deoxy-D-arabino-heptulosonate 7-phosphate (DAHP) to dehydroquinate (DHQ). This chain is 3-dehydroquinate synthase, found in Rhodopseudomonas palustris (strain BisB18).